Here is a 424-residue protein sequence, read N- to C-terminus: UDP-N-acetylglucosamine 1-carboxyvinyltransferase (424 aa).

22-23 is a binding site for phosphoenolpyruvate; that stretch reads KN. A UDP-N-acetyl-alpha-D-glucosamine-binding site is contributed by Arg-95. Cys-119 serves as the catalytic Proton donor. Cys-119 bears the 2-(S-cysteinyl)pyruvic acid O-phosphothioketal mark. Residues 124-128, Asp-311, and Ile-333 each bind UDP-N-acetyl-alpha-D-glucosamine; that span reads RPVDQ.

It belongs to the EPSP synthase family. MurA subfamily.

The protein resides in the cytoplasm. The catalysed reaction is phosphoenolpyruvate + UDP-N-acetyl-alpha-D-glucosamine = UDP-N-acetyl-3-O-(1-carboxyvinyl)-alpha-D-glucosamine + phosphate. Its pathway is cell wall biogenesis; peptidoglycan biosynthesis. Functionally, cell wall formation. Adds enolpyruvyl to UDP-N-acetylglucosamine. The protein is UDP-N-acetylglucosamine 1-carboxyvinyltransferase of Polaromonas sp. (strain JS666 / ATCC BAA-500).